The sequence spans 470 residues: Mitogen-activated protein kinase 15 (470 aa).

The region spanning phenylalanine 13–valine 306 is the Protein kinase domain. ATP-binding positions include leucine 19–valine 27 and lysine 42. The active-site Proton acceptor is the aspartate 137. Phosphothreonine is present on threonine 178. The short motif at threonine 178–tyrosine 180 is the TXY element. At tyrosine 180 the chain carries Phosphotyrosine. The interval proline 362–serine 445 is disordered. The segment covering methionine 394 to serine 406 has biased composition (low complexity). Over residues leucine 409–glycine 426 the composition is skewed to basic and acidic residues.

The protein belongs to the protein kinase superfamily. CMGC Ser/Thr protein kinase family. MAP kinase subfamily. The cofactor is Mg(2+). Post-translationally, dually phosphorylated on Thr-178 and Tyr-180, which activates the enzyme. As to expression, expressed in the URX neuron and in many other head sensory neurons. Isoform a: Expressed in head and tail ciliated sensory neurons, and in mid-body neurons. Isoform c: Expressed in head and tail ciliated sensory neurons, and in mid-body neurons.

It localises to the cell projection. Its subcellular location is the cilium. The protein resides in the cilium membrane. It is found in the cytoplasm. The protein localises to the cytoskeleton. It localises to the cilium axoneme. Its subcellular location is the cilium basal body. The protein resides in the cell junction. It is found in the perikaryon. The protein localises to the dendrite. It catalyses the reaction L-seryl-[protein] + ATP = O-phospho-L-seryl-[protein] + ADP + H(+). It carries out the reaction L-threonyl-[protein] + ATP = O-phospho-L-threonyl-[protein] + ADP + H(+). Its activity is regulated as follows. Activated by threonine and tyrosine phosphorylation. Functionally, atypical MAPK protein. Regulates primary cilium formation in sensory neurons and the localization of ciliary proteins involved in cilium structure, transport, and signaling. Acts in dopamine (DA) neurons to support synaptic membrane dat-1 availability via activation of rho-1 thereby sustaining normal levels of DA clearance. Plays a role in male mating behavior, probably in part through regulating the localization of the polycystin pkd-2. Functions postembryonically in the URX sensory neurons to constrain URX dendrite growth throughout lifetime, probably by restricting expansion of the subcellular sensory compartment at the dendrite ending. The protein is Mitogen-activated protein kinase 15 of Caenorhabditis elegans.